We begin with the raw amino-acid sequence, 419 residues long: Hyaluronan synthase (419 aa).

5 consecutive transmembrane segments (helical) span residues 8–28 (LIVLSFIFLISILIYLNMYLF), 33–53 (VGIYGVILITYLVIKLGLSFL), 318–338 (IVALWTIFEVVMFMMLIVAIG), 345–365 (AIQLDLIKLFAFLSIIFIVAL), and 376–396 (PASFLLSPLYGILHLFVLQPL).

This sequence belongs to the NodC/HAS family. Mg(2+) is required as a cofactor.

The protein resides in the cell membrane. It catalyses the reaction [hyaluronan](n) + UDP-N-acetyl-alpha-D-glucosamine = N-acetyl-beta-D-glucosaminyl-(1-&gt;4)-[hyaluronan](n) + UDP + H(+). It carries out the reaction N-acetyl-beta-D-glucosaminyl-(1-&gt;4)-[hyaluronan](n) + UDP-alpha-D-glucuronate = [hyaluronan](n+1) + UDP + H(+). It participates in glycan biosynthesis; hyaluronan biosynthesis. In terms of biological role, glycosaminoglycan synthesis. The hyaluronic acid capsule is involved in the pathogenicity of group A Streptococci; it may be the major virulence determinant. The polypeptide is Hyaluronan synthase (hasA) (Streptococcus pyogenes serotype M1).